Consider the following 117-residue polypeptide: Large-conductance mechanosensitive channel (117 aa).

Helical transmembrane passes span 7-27 (EFAL…GAAF), 30-50 (IVTA…FGTV), and 64-84 (GMFV…FIFV).

Belongs to the MscL family. In terms of assembly, homopentamer.

The protein localises to the cell membrane. Channel that opens in response to stretch forces in the membrane lipid bilayer. May participate in the regulation of osmotic pressure changes within the cell. The sequence is that of Large-conductance mechanosensitive channel from Staphylococcus saprophyticus subsp. saprophyticus (strain ATCC 15305 / DSM 20229 / NCIMB 8711 / NCTC 7292 / S-41).